The sequence spans 396 residues: Inositol polyphosphate multikinase (396 aa).

The span at 1-13 shows a compositional bias: low complexity; sequence MAAEPPALRLRPP. Residues 1 to 22 form a disordered region; sequence MAAEPPALRLRPPGSTGDSPPV. Ala-2 carries the post-translational modification N-acetylalanine. Ser-19 is modified (phosphoserine). Lys-58 contacts ATP. Arg-65 lines the substrate pocket. Residues 114–116 and Asp-127 contribute to the ATP site; that span reads EDV. Substrate is bound by residues Lys-129, 143–150, and Gln-179; that span reads KIQQQVSK. A Nuclear localization signal motif is present at residues 300–310; it reads RHRKLYAKKHQ. Residue Asp-365 participates in ATP binding.

Belongs to the inositol phosphokinase (IPK) family. It depends on Mg(2+) as a cofactor. As to expression, highly expressed in kidney, and at lower levels in hippocampus, brain cortex, cerebellum, heart and lung.

It localises to the nucleus. It catalyses the reaction 1D-myo-inositol 1,4,5-trisphosphate + 2 ATP = 1D-myo-inositol 1,3,4,5,6-pentakisphosphate + 2 ADP + 2 H(+). The enzyme catalyses 1D-myo-inositol 1,3,4,6-tetrakisphosphate + ATP = 1D-myo-inositol 1,3,4,5,6-pentakisphosphate + ADP + H(+). It carries out the reaction 1-octadecanoyl-2-(5Z,8Z,11Z,14Z)-eicosatetraenoyl-sn-glycero-3-phospho-1D-myo-inositol 4,5-bisphosphate + ATP = 1-octadecanoyl-2-(5Z,8Z,11Z,14Z-eicosatetraenoyl)-sn-glycero-3-phospho-(1D-myo-inositol 3,4,5-triphosphate) + ADP + H(+). The catalysed reaction is a 1,2-diacyl-sn-glycero-3-phospho-(1D-myo-inositol-4,5-bisphosphate) + ATP = a 1,2-diacyl-sn-glycero-3-phospho-(1D-myo-inositol-3,4,5-trisphosphate) + ADP + H(+). It catalyses the reaction 1D-myo-inositol 1,4,5,6-tetrakisphosphate + ATP = 1D-myo-inositol 1,3,4,5,6-pentakisphosphate + ADP + H(+). It functions in the pathway phospholipid metabolism; phosphatidylinositol metabolism. In terms of biological role, inositol phosphate kinase with a broad substrate specificity. Phosphorylates inositol 1,4,5-trisphosphate (Ins(1,4,5)P3) first to inositol 1,3,4,5-tetrakisphosphate and then to inositol 1,3,4,5,6-pentakisphosphate (Ins(1,3,4,5,6)P5). Phosphorylates inositol 1,3,4,6-tetrakisphosphate (Ins(1,3,4,6)P4). Phosphorylates inositol 1,4,5,6-tetrakisphosphate (Ins(1,4,5,6)P4). Phosphorylates glycero-3-phospho-1D-myo-inositol 4,5-bisphosphate to glycero-3-phospho-1D-myo-inositol 3,4,5-trisphosphate. Plays an important role in MLKL-mediated necroptosis via its role in the biosynthesis of inositol pentakisphosphate (InsP5) and inositol hexakisphosphate (InsP6). Binding of these highly phosphorylated inositol phosphates to MLKL mediates the release of an N-terminal auto-inhibitory region, leading to activation of the kinase. Essential for activated phospho-MLKL to oligomerize and localize to the cell membrane during necroptosis. Required for normal embryonic development, probably via its role in the biosynthesis of inositol 1,3,4,5,6-pentakisphosphate (Ins(1,3,4,5,6)P5) and inositol hexakisphosphate (InsP6). The protein is Inositol polyphosphate multikinase (Ipmk) of Rattus norvegicus (Rat).